The following is a 124-amino-acid chain: Small ribosomal subunit protein bS16 (124 aa).

Positions 81 to 90 (LKKRPARNNP) are enriched in basic residues. A disordered region spans residues 81–124 (LKKRPARNNPHKGEPGKKAQERIAAAKQAAEDAAAAAEADSASE). Basic and acidic residues predominate over residues 91–101 (HKGEPGKKAQE). A compositionally biased stretch (low complexity) spans 102-124 (RIAAAKQAAEDAAAAAEADSASE).

This sequence belongs to the bacterial ribosomal protein bS16 family.

This chain is Small ribosomal subunit protein bS16, found in Bartonella tribocorum (strain CIP 105476 / IBS 506).